The sequence spans 586 residues: MSTGNPEASAAVGAYRSLVPAGLRRRVARRVPAGLRTVLKHLLRRLHVLSLASRLFRGFRARRRWPHLFREGERLAALAGHGDRIALVRPTVSPLGLREANLELVVTALEEAGVDYFAVRGTSDFRSVLAVAESDREQVGRALERCAGHGPVYLRACRGETPQARPALAGSRAGRQQARHAAVLRTGMVWSDPTGSLVLGLEHSCDIEFWKPEAGRLVAPRPNRVTQDVSPREPRVTVPVSRLTGFAALHTRRTRSVRTVAACADALPEDVRFPIDVVYTWVDGNDPAWRRRRSAYDGGYHAESANAARYISRDELRYSLRALEQNAPWVRHVHLVTDGQRPAWLNDSHPRLTVVDHSEIFADPAALPTFNSHAIESRLHHIKGLSEHFLYLNDDMFLGRPVTPQDFFLSNGMTRTFFSPSQVPRPDPSPADRPVDAAGKNNRRLLLENFGSVIVQKLRHAPYALRRSVLEEIEREYPEAHWETSHSRFRSPTDISIPSSLYHYYAYFTGRAVPSDIRFAYLDLARPEVARRLGILLARRDRQAFCINDTLSDGHDVDRQTEMLATFLSAYYPVPSPFERKERAAR.

This sequence belongs to the stealth family.

This is Exopolysaccharide phosphotransferase SCO6023 from Streptomyces coelicolor (strain ATCC BAA-471 / A3(2) / M145).